The primary structure comprises 876 residues: AP-1 complex subunit gamma-1 (876 aa).

9 HEAT repeats span residues 97–135, 136–173, 248–284, 308–345, 346–382, 384–417, 418–454, 506–545, and 560–599; these read DERQ…ICSA, EMAR…KVPD, FLHI…KTES, SLRV…FDDQ, AVQR…ENNV, QLTK…KFSP, EKLW…NASE, VTES…RFPS, and SLLL…ATFN. One can recognise a GAE domain in the interval 756-873; sequence PAYAPIVAYE…LEEGQVSNFP (118 aa).

It belongs to the adaptor complexes large subunit family. As to quaternary structure, adaptor protein complex 1 (AP-1) is a heterotetramer composed of two large adaptins (gamma-type subunit and beta-type subunit), a medium adaptin (mu-type subunit) and a small adaptin (sigma-type subunit). Binds to EPSIN1. Interacts with DRP2A/ADL6 (via C-terminus).

The protein localises to the golgi apparatus. It is found in the cytoplasmic vesicle. Its subcellular location is the clathrin-coated vesicle membrane. Functionally, subunit of clathrin-associated adaptor protein complex 1 that plays a role in protein sorting at the trans-Golgi network and early endosomes (TGN/EE). The AP complexes mediate both the recruitment of clathrin to membranes and the recognition of sorting signals within the cytosolic tails of transmembrane cargo molecules. This Arabidopsis thaliana (Mouse-ear cress) protein is AP-1 complex subunit gamma-1 (GAMMA-ADR).